Consider the following 545-residue polypeptide: Glucans biosynthesis protein G (545 aa).

Positions 1–34 are cleaved as a signal peptide; it reads MVSLLRCQSFKPSSSLICSLALSAAFALSSSAFA. The disordered stretch occupies residues 38 to 60; it reads KPAENKPATPVVSPPKATAQPAN.

It belongs to the OpgD/OpgG family.

The protein localises to the periplasm. It functions in the pathway glycan metabolism; osmoregulated periplasmic glucan (OPG) biosynthesis. Its function is as follows. Involved in the biosynthesis of osmoregulated periplasmic glucans (OPGs). This Shewanella sp. (strain ANA-3) protein is Glucans biosynthesis protein G.